The following is a 191-amino-acid chain: Flavin reductase (NADH) (191 aa).

Residue 46–52 (YGLTCSA) participates in FAD binding. An NAD(+)-binding site is contributed by S55. 72–73 (RV) serves as a coordination point for FAD. Residues H144 and 166-169 (YWRR) each bind NAD(+).

The protein belongs to the non-flavoprotein flavin reductase family.

It catalyses the reaction a reduced flavin + NAD(+) = an oxidized flavin + NADH + 2 H(+). Its function is as follows. Catalyzes the reduction of flavin by NADH. Subsequently, the reduced flavins is transferred to the tetracycline 7-halogenase CtcP. The polypeptide is Flavin reductase (NADH) (Kitasatospora aureofaciens (Streptomyces aureofaciens)).